The primary structure comprises 85 residues: Cell division topological specificity factor (85 aa).

The protein belongs to the MinE family.

Functionally, prevents the cell division inhibition by proteins MinC and MinD at internal division sites while permitting inhibition at polar sites. This ensures cell division at the proper site by restricting the formation of a division septum at the midpoint of the long axis of the cell. In Xylella fastidiosa (strain M23), this protein is Cell division topological specificity factor.